The following is a 283-amino-acid chain: Light-independent protochlorophyllide reductase iron-sulfur ATP-binding protein (283 aa).

Residues 15–20 and lysine 44 contribute to the ATP site; that span reads GIGKST. Position 19 (serine 19) interacts with Mg(2+). Residues cysteine 100 and cysteine 134 each coordinate [4Fe-4S] cluster. ATP is bound at residue 185–186; the sequence is NR.

This sequence belongs to the NifH/BchL/ChlL family. Homodimer. Protochlorophyllide reductase is composed of three subunits; ChlL, ChlN and ChlB. [4Fe-4S] cluster serves as cofactor.

The enzyme catalyses chlorophyllide a + oxidized 2[4Fe-4S]-[ferredoxin] + 2 ADP + 2 phosphate = protochlorophyllide a + reduced 2[4Fe-4S]-[ferredoxin] + 2 ATP + 2 H2O. The protein operates within porphyrin-containing compound metabolism; chlorophyll biosynthesis (light-independent). Functionally, component of the dark-operative protochlorophyllide reductase (DPOR) that uses Mg-ATP and reduced ferredoxin to reduce ring D of protochlorophyllide (Pchlide) to form chlorophyllide a (Chlide). This reaction is light-independent. The L component serves as a unique electron donor to the NB-component of the complex, and binds Mg-ATP. The protein is Light-independent protochlorophyllide reductase iron-sulfur ATP-binding protein of Synechococcus sp. (strain JA-2-3B'a(2-13)) (Cyanobacteria bacterium Yellowstone B-Prime).